The primary structure comprises 298 residues: Super small secreted glycoprotein (298 aa).

A signal peptide spans 1-32 (MGVTGILQLPRDRFKRTSFFLWVIILFQRTFS). N-linked (GlcNAc...) asparagine; by host glycosylation occurs at Asn-40. Cystine bridges form between Cys-108-Cys-135 and Cys-121-Cys-147. 5 N-linked (GlcNAc...) asparagine; by host glycosylation sites follow: Asn-204, Asn-228, Asn-238, Asn-257, and Asn-268.

The protein belongs to the filoviruses glycoprotein family.

The protein localises to the secreted. In Epomops franqueti (Franquet's epauletted fruit bat), this protein is Super small secreted glycoprotein (GP).